The chain runs to 369 residues: Peridinin-chlorophyll a-binding protein 2, chloroplastic (369 aa).

Residues 1-56 (MVRSGKKAVVLATVAFCATSVVQKTCGFVPSPLRQRAAAAGAAASVATMFAPAAFA) constitute a chloroplast transit peptide. 2 repeat units span residues 57–219 (DEIG…VPSG) and 220–369 (DTIG…AAQR).

Homotrimer.

It is found in the plastid. It localises to the chloroplast. Its function is as follows. Water-soluble antenna for capture of solar energy in the blue-green range. Peridinin is an asymmetric carotenoid. This chain is Peridinin-chlorophyll a-binding protein 2, chloroplastic, found in Amphidinium carterae (Dinoflagellate).